The primary structure comprises 755 residues: Transcription factor kayak, isoforms A/B/F (755 aa).

2 stretches are compositionally biased toward low complexity: residues 23–66 (FAQQ…LPTQ) and 149–159 (QQHYPSESQSS). 4 disordered regions span residues 23-75 (FAQQ…SQSV), 149-168 (QQHY…PETP), 316-350 (LGQG…HTDS), and 383-440 (GSAS…KRRV). Polar residues predominate over residues 316-333 (LGQGSESEDSNASYNDTQ). Low complexity-rich tracts occupy residues 341–350 (TDTSSAHTDS) and 383–397 (GSAS…TSNT). Positions 418-481 (EQKRAVRRER…NQLEYLLATH (64 aa)) constitute a bZIP domain. The tract at residues 420 to 439 (KRAVRRERNKQAAARCRKRR) is basic motif. Positions 446–453 (LTEEVEQL) are leucine-zipper. The segment covering 510–531 (AGSSGSGASSHHNHNSNDSSNG) has biased composition (low complexity). Disordered regions lie at residues 510–552 (AGSS…PLDL) and 716–755 (DGGT…LVSL). Polar residues predominate over residues 539-549 (TLNSTGRSNSP). S548 bears the Phosphoserine mark.

This sequence belongs to the bZIP family. Fos subfamily. As to quaternary structure, homodimer. Heterodimer with Jra. The kay-Jra heterodimer binds more stably to the AP-1 site than either of the two proteins alone. In terms of tissue distribution, early expression in the embryo is mesodermal and some of this expression is localized to a region surrounding the cephalic furrow. Later in embryonic development expression is ectodermal, corresponding to muscle attachment sites. Also observed in part of the mid- and hindgut and in the anal pad.

The protein localises to the nucleus. Its function is as follows. Developmentally regulated transcription factor AP-1 binds and recognizes the enhancer DNA sequence: 5'-TGA[CG]TCA-3'. May play a role in the function or determination of a particular subset of cells in the developing embryo. It is able to carry out its function either independently of or in conjunction with Jra. The sequence is that of Transcription factor kayak, isoforms A/B/F (kay) from Drosophila melanogaster (Fruit fly).